Here is a 548-residue protein sequence, read N- to C-terminus: Glucose-6-phosphate isomerase (548 aa).

The active-site Proton donor is the E355. Active-site residues include H386 and K514.

Belongs to the GPI family.

The protein resides in the cytoplasm. It carries out the reaction alpha-D-glucose 6-phosphate = beta-D-fructose 6-phosphate. The protein operates within carbohydrate biosynthesis; gluconeogenesis. It functions in the pathway carbohydrate degradation; glycolysis; D-glyceraldehyde 3-phosphate and glycerone phosphate from D-glucose: step 2/4. Functionally, catalyzes the reversible isomerization of glucose-6-phosphate to fructose-6-phosphate. This Yersinia pestis (strain Pestoides F) protein is Glucose-6-phosphate isomerase.